Here is a 313-residue protein sequence, read N- to C-terminus: Porphobilinogen deaminase (313 aa).

S-(dipyrrolylmethanemethyl)cysteine is present on cysteine 242.

It belongs to the HMBS family. Monomer. The cofactor is dipyrromethane.

It carries out the reaction 4 porphobilinogen + H2O = hydroxymethylbilane + 4 NH4(+). It participates in porphyrin-containing compound metabolism; protoporphyrin-IX biosynthesis; coproporphyrinogen-III from 5-aminolevulinate: step 2/4. Its function is as follows. Tetrapolymerization of the monopyrrole PBG into the hydroxymethylbilane pre-uroporphyrinogen in several discrete steps. The polypeptide is Porphobilinogen deaminase (Yersinia enterocolitica serotype O:8 / biotype 1B (strain NCTC 13174 / 8081)).